The chain runs to 769 residues: PDZ domain-containing protein 4 (769 aa).

The PDZ domain occupies 130-214; it reads EVELYKSSHR…TNISLLVARP (85 aa). The interval 221 to 315 is disordered; that stretch reads RWKDSDRDDF…TNTPGSLRKF (95 aa). Over residues 229 to 239 the composition is skewed to acidic residues; sequence DFLDDFGSENE. Ser236 is modified (phosphoserine). Residues 282–298 show a composition bias toward basic and acidic residues; the sequence is RTDESTRNEESSEHDLL. Residues 389–419 are a coiled coil; sequence VNRNESLGHEMAMLEEELRHLEFKCRNILRA. The interval 445 to 579 is disordered; sequence ASEPKKHELS…RHRGQGQEGE (135 aa). Over residues 447-467 the composition is skewed to basic and acidic residues; the sequence is EPKKHELSDISELPEKSDKDS. Phosphoserine is present on Ser454. Polar residues predominate over residues 468-479; it reads TSAYNTGESCRS. Residues 530–547 are compositionally biased toward basic and acidic residues; sequence LSRDPEAGRRQHAEERGR.

In terms of tissue distribution, brain-specific. Expressed in fetal and adult brain. Up-regulated in synovial carcinomas.

It is found in the cytoplasm. It localises to the cell cortex. The sequence is that of PDZ domain-containing protein 4 (PDZD4) from Homo sapiens (Human).